The sequence spans 381 residues: Alpha-methylacyl-CoA racemase (381 aa).

Residues arginine 36 and leucine 54 to lysine 57 contribute to the substrate site. At lysine 57 the chain carries N6-acetyllysine. N6-acetyllysine; alternate occurs at positions 86 and 100. Lysine 86 and lysine 100 each carry N6-succinyllysine; alternate. The residue at position 117 (lysine 117) is an N6-acetyllysine. Glycine 120–tyrosine 125 is a binding site for substrate. Residue histidine 121 is the Proton acceptor of the active site. Aspartate 151 functions as the Proton donor in the catalytic mechanism. Lysine 267 is modified (N6-succinyllysine). The disordered stretch occupies residues threonine 316–serine 344. Residues alanine 379 to leucine 381 carry the Microbody targeting signal motif.

The protein belongs to the CoA-transferase III family. In terms of assembly, monomer.

It is found in the peroxisome. Its subcellular location is the mitochondrion. The enzyme catalyses a (2S)-2-methylacyl-CoA = a (2R)-2-methylacyl-CoA. It catalyses the reaction (25R)-3alpha,7alpha,12alpha-trihydroxy-5beta-cholestan-26-oyl-CoA = (25S)-3alpha,7alpha,12alpha-trihydroxy-5beta-cholestan-26-oyl-CoA. It carries out the reaction (2R,6)-dimethylheptanoyl-CoA = (2S,6)-dimethylheptanoyl-CoA. It participates in lipid metabolism; bile acid biosynthesis. Its pathway is lipid metabolism; fatty acid metabolism. Functionally, catalyzes the interconversion of (R)- and (S)-stereoisomers of alpha-methyl-branched-chain fatty acyl-CoA esters. Acts only on coenzyme A thioesters, not on free fatty acids, and accepts as substrates a wide range of alpha-methylacyl-CoAs, including pristanoyl-CoA, trihydroxycoprostanoyl-CoA (an intermediate in bile acid synthesis), and arylpropionic acids like the anti-inflammatory drug ibuprofen (2-(4-isobutylphenyl)propionic acid) but neither 3-methyl-branched nor linear-chain acyl-CoAs. The polypeptide is Alpha-methylacyl-CoA racemase (Amacr) (Mus musculus (Mouse)).